Reading from the N-terminus, the 275-residue chain is Myb/SANT-like DNA-binding domain-containing protein 3 (275 aa).

Residues 13-78 (FSELEKSILL…QLKKCWENIK (66 aa)) enclose the Myb-like domain. 2 positions are modified to phosphoserine: serine 96 and serine 98. Lysine 154 is covalently cross-linked (Glycyl lysine isopeptide (Lys-Gly) (interchain with G-Cter in SUMO2)). Residues 211 to 247 (QLIQMNEVHVAKIQQIERECEMAEEEHRIKMEVLNKK) adopt a coiled-coil conformation. A Phosphoserine modification is found at serine 274.

The protein belongs to the MSANTD3 family.

In Bos taurus (Bovine), this protein is Myb/SANT-like DNA-binding domain-containing protein 3 (MSANTD3).